We begin with the raw amino-acid sequence, 377 residues long: 2-iminoacetate synthase (377 aa).

The 231-residue stretch at 71-301 (NTVSFYVPLY…PEIELSLSTR (231 aa)) folds into the Radical SAM core domain. The [4Fe-4S] cluster site is built by C85, C89, and C92.

Belongs to the radical SAM superfamily. ThiH family. As to quaternary structure, forms a heterodimer with ThiG. [4Fe-4S] cluster serves as cofactor.

It catalyses the reaction L-tyrosine + S-adenosyl-L-methionine + NADPH = 2-iminoacetate + 4-methylphenol + 5'-deoxyadenosine + L-methionine + NADP(+). The protein operates within cofactor biosynthesis; thiamine diphosphate biosynthesis. Its function is as follows. Catalyzes the radical-mediated cleavage of tyrosine to 2-iminoacetate and 4-cresol. The sequence is that of 2-iminoacetate synthase (thiH) from Salmonella typhimurium (strain LT2 / SGSC1412 / ATCC 700720).